The primary structure comprises 265 residues: 5'-nucleotidase SurE (265 aa).

A divalent metal cation-binding residues include D8, D9, S40, and N98.

Belongs to the SurE nucleotidase family. The cofactor is a divalent metal cation.

It is found in the cytoplasm. The catalysed reaction is a ribonucleoside 5'-phosphate + H2O = a ribonucleoside + phosphate. Functionally, nucleotidase that shows phosphatase activity on nucleoside 5'-monophosphates. In Thermosynechococcus vestitus (strain NIES-2133 / IAM M-273 / BP-1), this protein is 5'-nucleotidase SurE.